The following is a 58-amino-acid chain: UPF0339 protein Msl4696 (58 aa).

Belongs to the UPF0339 family.

This is UPF0339 protein Msl4696 from Mesorhizobium japonicum (strain LMG 29417 / CECT 9101 / MAFF 303099) (Mesorhizobium loti (strain MAFF 303099)).